Here is a 250-residue protein sequence, read N- to C-terminus: N-acetylmuramoyl-L-alanine amidase CwlH (250 aa).

The first 44 residues, 1–44, serve as a signal peptide directing secretion; it reads MVTIKKDFIPVSNDNRPGYAMAPAYITVHNTANTAKGADAKMHA. In terms of domain architecture, N-acetylmuramoyl-L-alanine amidase spans 45–141; it reads KFVKNPNTSE…KKWSGKECPR (97 aa).

The protein belongs to the N-acetylmuramoyl-L-alanine amidase 2 family.

The protein resides in the secreted. The enzyme catalyses Hydrolyzes the link between N-acetylmuramoyl residues and L-amino acid residues in certain cell-wall glycopeptides.. Its function is as follows. Autolysins are involved in some important biological processes such as cell separation, cell-wall turnover, competence for genetic transformation, formation of the flagella and sporulation. Could play a role in mother cell lysis with CwlC. This Bacillus subtilis (strain 168) protein is N-acetylmuramoyl-L-alanine amidase CwlH (cwlH).